The primary structure comprises 393 residues: Phosphoglycerate kinase (393 aa).

Residues 21–23 (DLN), R36, 59–62 (HLGR), R113, and R146 each bind substrate. Residues K197, E319, and 345–348 (GGDT) contribute to the ATP site.

It belongs to the phosphoglycerate kinase family. As to quaternary structure, monomer.

The protein resides in the cytoplasm. It catalyses the reaction (2R)-3-phosphoglycerate + ATP = (2R)-3-phospho-glyceroyl phosphate + ADP. It functions in the pathway carbohydrate degradation; glycolysis; pyruvate from D-glyceraldehyde 3-phosphate: step 2/5. The chain is Phosphoglycerate kinase from Nitratidesulfovibrio vulgaris (strain DSM 19637 / Miyazaki F) (Desulfovibrio vulgaris).